We begin with the raw amino-acid sequence, 37 residues long: Large ribosomal subunit protein bL36c (37 aa).

This sequence belongs to the bacterial ribosomal protein bL36 family.

It localises to the plastid. Its subcellular location is the chloroplast. This is Large ribosomal subunit protein bL36c from Acorus calamus (Sweet flag).